We begin with the raw amino-acid sequence, 646 residues long: Phosphomethylpyrimidine synthase (646 aa).

A compositionally biased stretch (polar residues) spans 1-13 (MNIRSNPDTTRPA). The tract at residues 1 to 21 (MNIRSNPDTTRPAVTTGGLPS) is disordered. Residues Asn221, Met250, Tyr279, His315, 335–337 (SRG), 376–379 (DGLR), and Glu415 each bind substrate. His419 is a Zn(2+) binding site. Tyr442 contacts substrate. Residue His483 coordinates Zn(2+). Residues Cys563, Cys566, and Cys571 each contribute to the [4Fe-4S] cluster site.

It belongs to the ThiC family. In terms of assembly, homodimer. Requires [4Fe-4S] cluster as cofactor.

It catalyses the reaction 5-amino-1-(5-phospho-beta-D-ribosyl)imidazole + S-adenosyl-L-methionine = 4-amino-2-methyl-5-(phosphooxymethyl)pyrimidine + CO + 5'-deoxyadenosine + formate + L-methionine + 3 H(+). Its pathway is cofactor biosynthesis; thiamine diphosphate biosynthesis. Its function is as follows. Catalyzes the synthesis of the hydroxymethylpyrimidine phosphate (HMP-P) moiety of thiamine from aminoimidazole ribotide (AIR) in a radical S-adenosyl-L-methionine (SAM)-dependent reaction. The chain is Phosphomethylpyrimidine synthase from Rhodopseudomonas palustris (strain HaA2).